Here is a 549-residue protein sequence, read N- to C-terminus: Frizzled/smoothened-like sans CRD protein A (549 aa).

The N-terminal stretch at 1–22 (MKFNFKLILIILIINQILIINC) is a signal peptide. Residues 23-89 (KENKILEIYK…EVNTLSLMIK (67 aa)) are Extracellular-facing. The N-linked (GlcNAc...) asparagine glycan is linked to N63. Residues 90 to 110 (ITGTISFIASLILLLIYSPLI) form a helical membrane-spanning segment. The Cytoplasmic portion of the chain corresponds to 111-119 (NRMGYNRHT). Residues 120–140 (IGIFFLTFSVFLIMLTDIIYV) form a helical membrane-spanning segment. Topologically, residues 141-162 (HHGNDLICPQSHRYSRQNDSGC) are extracellular. An N-linked (GlcNAc...) asparagine glycan is attached at N158. A helical membrane pass occupies residues 163 to 183 (TITGILFQYGCIAAVLFWATL). Over 184–198 (SLDLYLTLKKISTKK) the chain is Cytoplasmic. The helical transmembrane segment at 199-219 (VEKWYLIILTLIALILTFVPL) threads the bilayer. Topologically, residues 220–241 (VKKSYGYLVTGLACWILDSTDQ) are extracellular. A helical membrane pass occupies residues 242 to 262 (IIFFWAPFTAILGIGSILIVL). Residues 263–287 (VVYEIYKISKITKQNRGIFQSHIRP) are Cytoplasmic-facing. Residues 288 to 308 (LLMVLFIFGQFLFILAFNALI) traverse the membrane as a helical segment. The Extracellular portion of the chain corresponds to 309-346 (NNKYDEYSARMDSYIDCLFSSSSYSYLCRLKTFPFEME). A helical membrane pass occupies residues 347 to 367 (FIVLFFLRLIGIEVLIFYGFT). The Cytoplasmic segment spans residues 368–549 (QQTKKILLHS…NNNSNNDENN (182 aa)). Low complexity-rich tracts occupy residues 417–474 (NNNN…SQQN) and 536–549 (NKNINNNSNNDENN). Disordered stretches follow at residues 417–483 (NNNN…QKLS) and 528–549 (QYEEDEINNKNINNNSNNDENN). The stretch at 432 to 475 (NNLNNNLNNNNLNNNNNLNNLNNLNINNNLKNSQNNLNNSQQNE) forms a coiled coil.

This sequence belongs to the G-protein coupled receptor Fz/Smo family.

It is found in the membrane. This Dictyostelium discoideum (Social amoeba) protein is Frizzled/smoothened-like sans CRD protein A (fscA).